Here is a 509-residue protein sequence, read N- to C-terminus: Dihydrolipoyl dehydrogenase, mitochondrial (509 aa).

A mitochondrion-targeting transit peptide spans 1–35 (MQSWSRVYCSLAKRGHFSRISHGLQAVSAVPLRTY). Residue K66 is modified to N6-acetyllysine; alternate. At K66 the chain carries N6-succinyllysine; alternate. FAD contacts are provided by residues 71–80 (EKNETLGGTC) and K89. Residues C80 and C85 are joined by a disulfide bond. Residues K104, K122, K132, and K143 each carry the N6-acetyllysine; alternate modification. 4 positions are modified to N6-succinyllysine; alternate: K104, K122, K132, and K143. Residue G154 participates in FAD binding. 2 positions are modified to N6-succinyllysine: K159 and K166. 183-185 (TGS) serves as a coordination point for FAD. Residues 220-227 (GAGVIGVE) and E243 contribute to the NAD(+) site. An N6-succinyllysine mark is found at K273 and K277. Position 278 (V278) interacts with NAD(+). Phosphoserine occurs at positions 285 and 297. G314 is a binding site for NAD(+). N6-acetyllysine is present on K346. FAD is bound by residues D355 and 361 to 364 (MLAH). N6-acetyllysine; alternate is present on K410. Residue K410 is modified to N6-succinyllysine; alternate. 2 positions are modified to N6-acetyllysine: K417 and K420. K430 is subject to N6-succinyllysine. The Proton acceptor role is filled by H487. S502 bears the Phosphoserine mark. K505 is modified (N6-acetyllysine; alternate). Residue K505 is modified to N6-succinyllysine; alternate.

Belongs to the class-I pyridine nucleotide-disulfide oxidoreductase family. As to quaternary structure, homodimer. Part of the multimeric pyruvate dehydrogenase complex that contains multiple copies of pyruvate dehydrogenase (subunits PDHA (PDHA1 or PDHA2) and PDHB, E1), dihydrolipoamide acetyltransferase (DLAT, E2) and lipoamide dehydrogenase (DLD, E3). These subunits are bound to an inner core composed of about 48 DLAT and 12 PDHX molecules (by non covalent bonds). The 2-oxoglutarate dehydrogenase complex is composed of OGDH (2-oxoglutarate dehydrogenase; E1), DLST (dihydrolipoamide succinyltransferase; E2), DLD (dihydrolipoamide dehydrogenase; E3) and the assembly factor KGD4. It contains multiple copies of the three enzymatic components (E1, E2 and E3). In the nucleus, the 2-oxoglutarate dehydrogenase complex associates with KAT2A. Interacts with PDHX. The cofactor is FAD. Tyrosine phosphorylated.

Its subcellular location is the mitochondrion matrix. It localises to the nucleus. It is found in the cell projection. The protein resides in the cilium. The protein localises to the flagellum. Its subcellular location is the cytoplasmic vesicle. It localises to the secretory vesicle. It is found in the acrosome. It catalyses the reaction N(6)-[(R)-dihydrolipoyl]-L-lysyl-[protein] + NAD(+) = N(6)-[(R)-lipoyl]-L-lysyl-[protein] + NADH + H(+). Its function is as follows. Lipoamide dehydrogenase is a component of the glycine cleavage system as well as an E3 component of three alpha-ketoacid dehydrogenase complexes (pyruvate-, alpha-ketoglutarate-, and branched-chain amino acid-dehydrogenase complex). The 2-oxoglutarate dehydrogenase complex is mainly active in the mitochondrion. A fraction of the 2-oxoglutarate dehydrogenase complex also localizes in the nucleus and is required for lysine succinylation of histones: associates with KAT2A on chromatin and provides succinyl-CoA to histone succinyltransferase KAT2A. In monomeric form may have additional moonlighting function as serine protease. Involved in the hyperactivation of spermatazoa during capacitation and in the spermatazoal acrosome reaction. The protein is Dihydrolipoyl dehydrogenase, mitochondrial (DLD) of Canis lupus familiaris (Dog).